The chain runs to 226 residues: Purine nucleoside phosphorylase Cj1217c (226 aa).

Zn(2+) is bound by residues H58, C93, and H109.

The protein belongs to the purine nucleoside phosphorylase YfiH/LACC1 family. Homodimer. Requires Cu(2+) as cofactor. The cofactor is Zn(2+).

It catalyses the reaction adenosine + phosphate = alpha-D-ribose 1-phosphate + adenine. The catalysed reaction is S-methyl-5'-thioadenosine + phosphate = 5-(methylsulfanyl)-alpha-D-ribose 1-phosphate + adenine. The enzyme catalyses inosine + phosphate = alpha-D-ribose 1-phosphate + hypoxanthine. It carries out the reaction adenosine + H2O + H(+) = inosine + NH4(+). Purine nucleoside enzyme that catalyzes the phosphorolysis of adenosine and inosine nucleosides, yielding D-ribose 1-phosphate and the respective free bases, adenine and hypoxanthine. Also catalyzes the phosphorolysis of S-methyl-5'-thioadenosine into adenine and S-methyl-5-thio-alpha-D-ribose 1-phosphate. Also has adenosine deaminase activity. The polypeptide is Purine nucleoside phosphorylase Cj1217c (Campylobacter jejuni subsp. jejuni serotype O:2 (strain ATCC 700819 / NCTC 11168)).